A 364-amino-acid polypeptide reads, in one-letter code: Leucine dehydrogenase (364 aa).

Lysine 80 is a catalytic residue. Position 180 to 186 (180 to 186) interacts with NAD(+); sequence GVGNVAY.

Belongs to the Glu/Leu/Phe/Val dehydrogenases family.

The enzyme catalyses L-leucine + NAD(+) + H2O = 4-methyl-2-oxopentanoate + NH4(+) + NADH + H(+). It functions in the pathway amino-acid degradation; L-leucine degradation; 4-methyl-2-oxopentanoate from L-leucine (dehydrogenase route): step 1/1. Functionally, catalyzes the reversible deamination of L-leucine to 4-methyl-2-oxopentanoate. This Bacillus subtilis (strain 168) protein is Leucine dehydrogenase (yqiT).